The chain runs to 332 residues: 4-hydroxythreonine-4-phosphate dehydrogenase (332 aa).

The substrate site is built by histidine 138 and threonine 139. Positions 168, 213, and 269 each coordinate a divalent metal cation. Lysine 277, asparagine 286, and arginine 295 together coordinate substrate.

It belongs to the PdxA family. Homodimer. Zn(2+) is required as a cofactor. Mg(2+) serves as cofactor. Requires Co(2+) as cofactor.

It localises to the cytoplasm. It carries out the reaction 4-(phosphooxy)-L-threonine + NAD(+) = 3-amino-2-oxopropyl phosphate + CO2 + NADH. Its pathway is cofactor biosynthesis; pyridoxine 5'-phosphate biosynthesis; pyridoxine 5'-phosphate from D-erythrose 4-phosphate: step 4/5. In terms of biological role, catalyzes the NAD(P)-dependent oxidation of 4-(phosphooxy)-L-threonine (HTP) into 2-amino-3-oxo-4-(phosphooxy)butyric acid which spontaneously decarboxylates to form 3-amino-2-oxopropyl phosphate (AHAP). The sequence is that of 4-hydroxythreonine-4-phosphate dehydrogenase from Vibrio parahaemolyticus serotype O3:K6 (strain RIMD 2210633).